Here is a 363-residue protein sequence, read N- to C-terminus: Pyrimidine monooxygenase RutA (363 aa).

Residues 49–50, Asn-115, Glu-124, 140–141, and Ser-190 each bind FMN; these read IK and RY.

Belongs to the NtaA/SnaA/DszA monooxygenase family. RutA subfamily.

The catalysed reaction is uracil + FMNH2 + NADH + O2 = (Z)-3-ureidoacrylate + FMN + NAD(+) + H2O + H(+). It carries out the reaction thymine + FMNH2 + NADH + O2 = (Z)-2-methylureidoacrylate + FMN + NAD(+) + H2O + H(+). Functionally, catalyzes the pyrimidine ring opening between N-3 and C-4 by an unusual flavin hydroperoxide-catalyzed mechanism, adding oxygen atoms in the process to yield ureidoacrylate peracid, that immediately reacts with FMN forming ureidoacrylate and FMN-N(5)-oxide. The FMN-N(5)-oxide reacts spontaneously with NADH to produce FMN. Requires the flavin reductase RutF to regenerate FMN in vivo. This chain is Pyrimidine monooxygenase RutA, found in Rhizobium rhizogenes (strain K84 / ATCC BAA-868) (Agrobacterium radiobacter).